The primary structure comprises 285 residues: Transmembrane protein 53-B (285 aa).

The chain crosses the membrane as a helical span at residues 165–185; the sequence is FLALAAFAIMVIILRIVLYPV.

Belongs to the TMEM53 family.

The protein resides in the nucleus outer membrane. Ensures normal bone formation, through the negative regulation of bone morphogenetic protein (BMP) signaling in osteoblast lineage cells by blocking cytoplasm-nucleus translocation of phosphorylated SMAD proteins. The sequence is that of Transmembrane protein 53-B (tmem53-b) from Xenopus laevis (African clawed frog).